We begin with the raw amino-acid sequence, 78 residues long: Defensin beta 136 (78 aa).

An N-terminal signal peptide occupies residues 1 to 21; it reads MNLCLSALLFFLVILLPSGKG. Disulfide bonds link C33–C60, C40–C54, and C44–C61.

This sequence belongs to the beta-defensin family.

Its subcellular location is the secreted. In terms of biological role, host defense peptide that exhibits antibacterial and antifungal activity. Exhibits antimicrobial activity against E.coli, S.aureus and C.albicans (in vitro). Has high lipopolysaccharide (LPS)-binding affinity, and may thereby be involved in immunoregulation through LPS neutralization. The chain is Defensin beta 136 (DEFB136) from Homo sapiens (Human).